A 411-amino-acid chain; its full sequence is Glutamate dehydrogenase 2 (411 aa).

The active site involves Lys-102.

It belongs to the Glu/Leu/Phe/Val dehydrogenases family.

Its subcellular location is the mitochondrion. It catalyses the reaction L-glutamate + NAD(+) + H2O = 2-oxoglutarate + NH4(+) + NADH + H(+). The enzyme catalyses L-glutamate + NADP(+) + H2O = 2-oxoglutarate + NH4(+) + NADPH + H(+). In Arabidopsis thaliana (Mouse-ear cress), this protein is Glutamate dehydrogenase 2 (GDH2).